The primary structure comprises 438 residues: 3-phosphoshikimate 1-carboxyvinyltransferase (438 aa).

3-phosphoshikimate contacts are provided by lysine 28, serine 29, and arginine 33. Residue lysine 28 coordinates phosphoenolpyruvate. Residues glycine 97 and arginine 125 each coordinate phosphoenolpyruvate. The 3-phosphoshikimate site is built by serine 168, serine 169, glutamine 170, glutamate 316, and histidine 343. Phosphoenolpyruvate is bound at residue glutamine 170. The active-site Proton acceptor is glutamate 316. Residues arginine 347, arginine 388, and lysine 413 each coordinate phosphoenolpyruvate.

The protein belongs to the EPSP synthase family. As to quaternary structure, monomer.

Its subcellular location is the cytoplasm. The catalysed reaction is 3-phosphoshikimate + phosphoenolpyruvate = 5-O-(1-carboxyvinyl)-3-phosphoshikimate + phosphate. The protein operates within metabolic intermediate biosynthesis; chorismate biosynthesis; chorismate from D-erythrose 4-phosphate and phosphoenolpyruvate: step 6/7. In terms of biological role, catalyzes the transfer of the enolpyruvyl moiety of phosphoenolpyruvate (PEP) to the 5-hydroxyl of shikimate-3-phosphate (S3P) to produce enolpyruvyl shikimate-3-phosphate and inorganic phosphate. The chain is 3-phosphoshikimate 1-carboxyvinyltransferase from Rhodococcus jostii (strain RHA1).